Reading from the N-terminus, the 361-residue chain is tRNA/tmRNA (uracil-C(5))-methyltransferase (361 aa).

The S-adenosyl-L-methionine site is built by Gln185, Tyr213, Asn218, Glu234, and Asp294. The active-site Nucleophile is Cys319. Glu353 functions as the Proton acceptor in the catalytic mechanism.

It belongs to the class I-like SAM-binding methyltransferase superfamily. RNA M5U methyltransferase family. TrmA subfamily.

It carries out the reaction uridine(54) in tRNA + S-adenosyl-L-methionine = 5-methyluridine(54) in tRNA + S-adenosyl-L-homocysteine + H(+). It catalyses the reaction uridine(341) in tmRNA + S-adenosyl-L-methionine = 5-methyluridine(341) in tmRNA + S-adenosyl-L-homocysteine + H(+). In terms of biological role, dual-specificity methyltransferase that catalyzes the formation of 5-methyluridine at position 54 (m5U54) in all tRNAs, and that of position 341 (m5U341) in tmRNA (transfer-mRNA). The polypeptide is tRNA/tmRNA (uracil-C(5))-methyltransferase (Azotobacter vinelandii (strain DJ / ATCC BAA-1303)).